The chain runs to 406 residues: DNA repair protein RAD55 (406 aa).

43–50 contacts ATP; sequence GPPGIGKT. A disordered region spans residues 385–406; the sequence is DSNDNPLPNAEGKEEIIYDSEG.

The protein belongs to the RecA family. RAD55 subfamily.

The protein localises to the nucleus. In terms of biological role, required for radiation resistance and meiotic viability and presumably acts in recombination and recombinational DNA repair pathways. The polypeptide is DNA repair protein RAD55 (RAD55) (Saccharomyces cerevisiae (strain ATCC 204508 / S288c) (Baker's yeast)).